Here is a 363-residue protein sequence, read N- to C-terminus: 3-isopropylmalate dehydrogenase (363 aa).

78 to 91 contributes to the NAD(+) binding site; that stretch reads GPKWENLPPESQPE. Residues Arg-99, Arg-109, Arg-138, and Asp-227 each contribute to the substrate site. Mg(2+) is bound by residues Asp-227, Asp-251, and Asp-255. 285–297 serves as a coordination point for NAD(+); sequence GSAPDIAGKNIAN.

The protein belongs to the isocitrate and isopropylmalate dehydrogenases family. LeuB type 1 subfamily. In terms of assembly, homodimer. Requires Mg(2+) as cofactor. Mn(2+) serves as cofactor.

The protein localises to the cytoplasm. It carries out the reaction (2R,3S)-3-isopropylmalate + NAD(+) = 4-methyl-2-oxopentanoate + CO2 + NADH. The protein operates within amino-acid biosynthesis; L-leucine biosynthesis; L-leucine from 3-methyl-2-oxobutanoate: step 3/4. Its function is as follows. Catalyzes the oxidation of 3-carboxy-2-hydroxy-4-methylpentanoate (3-isopropylmalate) to 3-carboxy-4-methyl-2-oxopentanoate. The product decarboxylates to 4-methyl-2 oxopentanoate. The polypeptide is 3-isopropylmalate dehydrogenase (Salmonella typhi).